Consider the following 561-residue polypeptide: NADH-quinone oxidoreductase subunit C/D (561 aa).

Positions 1-152 are NADH dehydrogenase I subunit C; that stretch reads MLEKFSSKFN…YQVLYESDDL (152 aa). The tract at residues 176–561 is NADH dehydrogenase I subunit D; the sequence is KYTFLNIGPS…LNIIAGELDR (386 aa).

The protein in the N-terminal section; belongs to the complex I 30 kDa subunit family. It in the C-terminal section; belongs to the complex I 49 kDa subunit family. In terms of assembly, NDH-1 is composed of 13 different subunits. Subunits NuoB, CD, E, F, and G constitute the peripheral sector of the complex.

The protein localises to the cell inner membrane. The enzyme catalyses a quinone + NADH + 5 H(+)(in) = a quinol + NAD(+) + 4 H(+)(out). In terms of biological role, NDH-1 shuttles electrons from NADH, via FMN and iron-sulfur (Fe-S) centers, to quinones in the respiratory chain. The immediate electron acceptor for the enzyme in this species is believed to be ubiquinone. Couples the redox reaction to proton translocation (for every two electrons transferred, four hydrogen ions are translocated across the cytoplasmic membrane), and thus conserves the redox energy in a proton gradient. This Campylobacter fetus subsp. fetus (strain 82-40) protein is NADH-quinone oxidoreductase subunit C/D.